We begin with the raw amino-acid sequence, 194 residues long: HTH-type transcriptional regulator BetI (194 aa).

The region spanning Glu-8 to Leu-68 is the HTH tetR-type domain. Residues Thr-31–Phe-50 constitute a DNA-binding region (H-T-H motif).

Its pathway is amine and polyamine biosynthesis; betaine biosynthesis via choline pathway [regulation]. Repressor involved in the biosynthesis of the osmoprotectant glycine betaine. It represses transcription of the choline transporter BetT and the genes of BetAB involved in the synthesis of glycine betaine. The protein is HTH-type transcriptional regulator BetI of Burkholderia cenocepacia (strain ATCC BAA-245 / DSM 16553 / LMG 16656 / NCTC 13227 / J2315 / CF5610) (Burkholderia cepacia (strain J2315)).